Reading from the N-terminus, the 520-residue chain is Probable glycerol-3-phosphate acyltransferase 3 (520 aa).

The next 5 helical transmembrane spans lie at I5–L20, Y64–L84, I88–I108, T264–A284, and L286–C306. The short motif at H334–D339 is the HXXXXD motif element.

It belongs to the GPAT/DAPAT family. As to expression, widely expressed at low level. Expressed at higher level in seedlings and leaves.

The protein resides in the membrane. The enzyme catalyses sn-glycerol 3-phosphate + an acyl-CoA = a 1-acyl-sn-glycero-3-phosphate + CoA. Its pathway is phospholipid metabolism; CDP-diacylglycerol biosynthesis; CDP-diacylglycerol from sn-glycerol 3-phosphate: step 1/3. Functionally, esterifies acyl-group from acyl-ACP to the sn-1 position of glycerol-3-phosphate, an essential step in glycerolipid biosynthesis. The polypeptide is Probable glycerol-3-phosphate acyltransferase 3 (GPAT3) (Arabidopsis thaliana (Mouse-ear cress)).